We begin with the raw amino-acid sequence, 155 residues long: Ribosome maturation factor RimP (155 aa).

This sequence belongs to the RimP family.

The protein localises to the cytoplasm. Required for maturation of 30S ribosomal subunits. The polypeptide is Ribosome maturation factor RimP (Synechococcus sp. (strain RCC307)).